The chain runs to 160 residues: Large ribosomal subunit protein uL30m (160 aa).

The transit peptide at M1–H34 directs the protein to the mitochondrion. Residues K44 to H64 form a disordered region.

It belongs to the universal ribosomal protein uL30 family. As to quaternary structure, component of the mitochondrial ribosome large subunit (39S) which comprises a 16S rRNA and about 50 distinct proteins.

It is found in the mitochondrion. This chain is Large ribosomal subunit protein uL30m (Mrpl30), found in Mus musculus (Mouse).